A 110-amino-acid polypeptide reads, in one-letter code: Iron-sulfur cluster assembly protein CyaY (110 aa).

This sequence belongs to the frataxin family.

In terms of biological role, involved in iron-sulfur (Fe-S) cluster assembly. May act as a regulator of Fe-S biogenesis. The protein is Iron-sulfur cluster assembly protein CyaY of Pseudomonas putida (strain W619).